The chain runs to 376 residues: Non-structural protein NS2 (376 aa).

The segment covering Glu-163 to Asp-188 has biased composition (basic and acidic residues). The disordered stretch occupies residues Glu-163–Asn-201.

It belongs to the orbivirus non-structural protein NS2 family.

Functionally, single-stranded RNA-binding protein. This chain is Non-structural protein NS2 (Segment-8), found in Antilocapra americana (Pronghorn).